The primary structure comprises 194 residues: FMN-dependent NADH:quinone oxidoreductase 1 (194 aa).

FMN-binding positions include serine 9 and 85-88 (MYNF).

Belongs to the azoreductase type 1 family. As to quaternary structure, homodimer. FMN serves as cofactor.

The catalysed reaction is 2 a quinone + NADH + H(+) = 2 a 1,4-benzosemiquinone + NAD(+). It catalyses the reaction N,N-dimethyl-1,4-phenylenediamine + anthranilate + 2 NAD(+) = 2-(4-dimethylaminophenyl)diazenylbenzoate + 2 NADH + 2 H(+). Quinone reductase that provides resistance to thiol-specific stress caused by electrophilic quinones. Functionally, also exhibits azoreductase activity. Catalyzes the reductive cleavage of the azo bond in aromatic azo compounds to the corresponding amines. The sequence is that of FMN-dependent NADH:quinone oxidoreductase 1 from Xanthomonas euvesicatoria pv. vesicatoria (strain 85-10) (Xanthomonas campestris pv. vesicatoria).